The following is a 300-amino-acid chain: uncharacterized protein (300 aa).

Catalysis depends on serine 49, which acts as the Charge relay system. Residue tyrosine 137 is the Proton donor of the active site. Catalysis depends on lysine 165, which acts as the Schiff-base intermediate with substrate.

The protein belongs to the DapA family. As to quaternary structure, homotetramer.

It is found in the cytoplasm. Its function is as follows. Upon expression in E.coli complements a dapA deletion mutation, but this may not be its physiological function. This is an uncharacterized protein from Rhizobium meliloti (Ensifer meliloti).